A 2386-amino-acid chain; its full sequence is Protein kinase rad3 (2386 aa).

One can recognise an FAT domain in the interval 1386 to 1943; sequence TLGIVSLNCG…LWQLMATIKS (558 aa). The 319-residue stretch at 2052 to 2370 folds into the PI3K/PI4K catalytic domain; that stretch reads FEDEVDIMNS…QIQELIKSAV (319 aa). Positions 2058–2064 are G-loop; it reads IMNSLQK. A catalytic loop region spans residues 2227-2235; sequence GLGDRHGEN. The interval 2247–2271 is activation loop; sequence HVDFNCLFDKGLTFEKPEKVPFRLT. The FATC domain occupies 2354–2386; that stretch reads IPLSIEGQIQELIKSAVNPKNLVEMYIGWAAYF.

Belongs to the PI3/PI4-kinase family. ATM subfamily. As to quaternary structure, interacts with crb2 (via BRCT domain). Interacts with chk1.

The protein localises to the nucleus. The catalysed reaction is L-seryl-[protein] + ATP = O-phospho-L-seryl-[protein] + ADP + H(+). The enzyme catalyses L-threonyl-[protein] + ATP = O-phospho-L-threonyl-[protein] + ADP + H(+). In terms of biological role, serine/threonine kinase which activates checkpoint signaling upon genotoxic stresses. Involved in G2 arrest following DNA damage where it phosphorylates chk1. Phosphorylation of 'Thr-73' and 'Ser-80' of checkpoint mediator crb2 promotes its interaction with chk1. It is also involved in the dependence of mitosis on the completion of DNA replication. The polypeptide is Protein kinase rad3 (rad3) (Schizosaccharomyces pombe (strain 972 / ATCC 24843) (Fission yeast)).